The primary structure comprises 452 residues: Neuromedin-K receptor (452 aa).

Residues 1–71 lie on the Extracellular side of the membrane; the sequence is MASVPTGENW…TNQFVQPSWR (71 aa). N-linked (GlcNAc...) asparagine glycosylation is found at Asn-9, Asn-23, Asn-40, and Asn-60. The helical transmembrane segment at 72–94 threads the bilayer; the sequence is IALWSLAYGLVVAVAVFGNLIVI. Over 95-104 the chain is Cytoplasmic; the sequence is WIILAHKRMR. Residues 105–126 form a helical membrane-spanning segment; the sequence is TVTNYFLVNLAFSDASVAAFNT. At 127–146 the chain is on the extracellular side; sequence LVNFIYGVHSEWYFGANYCR. Residues Cys-145 and Cys-220 are joined by a disulfide bond. A helical membrane pass occupies residues 147–168; it reads FQNFFPITAVFASIYSMTAIAV. Residues 169–188 are Cytoplasmic-facing; it reads DRYMAIIDPLKPRLSATATK. Residues 189–209 form a helical membrane-spanning segment; the sequence is IVIGSIWILAFLLAFPQCLYS. At 210–232 the chain is on the extracellular side; the sequence is KIKVMPGRTLCYVQWPEGPKQHF. Residues 233–257 traverse the membrane as a helical segment; it reads TYHIIVIILVYCFPLLIMGVTYTIV. Residues 258 to 286 lie on the Cytoplasmic side of the membrane; that stretch reads GITLWGGEIPGDTCDKYHEQLKAKRKVVK. A helical membrane pass occupies residues 287–308; the sequence is MMIIVVVTFAICWLPYHVYFIL. Residues 309–321 are Extracellular-facing; it reads TAIYQQLNRWKYI. Residues 322–346 traverse the membrane as a helical segment; sequence QQVYLASFWLAMSSTMYNPIIYCCL. The Cytoplasmic portion of the chain corresponds to 347 to 452; the sequence is NKRFRAGFKR…SPYTSVDEYS (106 aa). Residue Cys-361 is the site of S-palmitoyl cysteine attachment. Residues 401 to 452 are disordered; it reads DPSEGDPAKSSRKKRAVPRDPSANGCSHREFKSASTTSSFISSPYTSVDEYS. The span at 433 to 452 shows a compositional bias: low complexity; the sequence is SASTTSSFISSPYTSVDEYS.

Belongs to the G-protein coupled receptor 1 family. The anchoring of this receptor to the plasma membrane is probably mediated by the palmitoylation of a cysteine residue.

The protein resides in the cell membrane. Its function is as follows. This is a receptor for the tachykinin neuropeptide neuromedin-K (neurokinin B). It is associated with G proteins that activate a phosphatidylinositol-calcium second messenger system. This chain is Neuromedin-K receptor (Tacr3), found in Mus musculus (Mouse).